Consider the following 31-residue polypeptide: U8-ctenitoxin-Co1a (31 aa).

Cystine bridges form between Cys4-Cys18 and Cys11-Cys24.

As to expression, expressed by the venom gland.

The protein resides in the secreted. Functionally, blocks voltage-gated sodium channels (Nav). This Ctenus ornatus (Brazilian spider) protein is U8-ctenitoxin-Co1a.